Consider the following 20-residue polypeptide: Non-secretory ribonuclease (20 aa).

Catalysis depends on histidine 16, which acts as the Proton acceptor.

Belongs to the pancreatic ribonuclease family. Interacts with and forms a tight 1:1 complex with RNH1. Dimerization of two such complexes may occur.

The protein resides in the lysosome. Its subcellular location is the cytoplasmic granule. The enzyme catalyses an [RNA] containing cytidine + H2O = an [RNA]-3'-cytidine-3'-phosphate + a 5'-hydroxy-ribonucleotide-3'-[RNA].. It carries out the reaction an [RNA] containing uridine + H2O = an [RNA]-3'-uridine-3'-phosphate + a 5'-hydroxy-ribonucleotide-3'-[RNA].. Its function is as follows. This is a non-secretory ribonuclease. It is a pyrimidine specific nuclease with a slight preference for U. Cytotoxin and helminthotoxin. Possesses a wide variety of biological activities. The polypeptide is Non-secretory ribonuclease (RNASE2) (Sus scrofa (Pig)).